We begin with the raw amino-acid sequence, 141 residues long: Hemoglobin subunit alpha-A (141 aa).

The region spanning 1-141 (VLSGSDKTNV…VGNVLTAKYR (141 aa)) is the Globin domain. An O2-binding site is contributed by His-58. His-87 contributes to the heme b binding site.

It belongs to the globin family. Heterotetramer of two alpha chains and two beta chains. In terms of tissue distribution, red blood cells.

Its function is as follows. Involved in oxygen transport from the lung to the various peripheral tissues. This chain is Hemoglobin subunit alpha-A (HBAA), found in Chroicocephalus ridibundus (Black-headed gull).